We begin with the raw amino-acid sequence, 493 residues long: Aspartyl/glutamyl-tRNA(Asn/Gln) amidotransferase subunit B (493 aa).

The protein belongs to the GatB/GatE family. GatB subfamily. Heterotrimer of A, B and C subunits.

It catalyses the reaction L-glutamyl-tRNA(Gln) + L-glutamine + ATP + H2O = L-glutaminyl-tRNA(Gln) + L-glutamate + ADP + phosphate + H(+). The enzyme catalyses L-aspartyl-tRNA(Asn) + L-glutamine + ATP + H2O = L-asparaginyl-tRNA(Asn) + L-glutamate + ADP + phosphate + 2 H(+). Allows the formation of correctly charged Asn-tRNA(Asn) or Gln-tRNA(Gln) through the transamidation of misacylated Asp-tRNA(Asn) or Glu-tRNA(Gln) in organisms which lack either or both of asparaginyl-tRNA or glutaminyl-tRNA synthetases. The reaction takes place in the presence of glutamine and ATP through an activated phospho-Asp-tRNA(Asn) or phospho-Glu-tRNA(Gln). The chain is Aspartyl/glutamyl-tRNA(Asn/Gln) amidotransferase subunit B from Aromatoleum aromaticum (strain DSM 19018 / LMG 30748 / EbN1) (Azoarcus sp. (strain EbN1)).